The sequence spans 411 residues: LL-diaminopimelate aminotransferase (411 aa).

Tyrosine 15 and glycine 42 together coordinate substrate. Residues tyrosine 72, 108–109, tyrosine 132, asparagine 187, tyrosine 218, and 246–248 each bind pyridoxal 5'-phosphate; these read SK and SFS. Residues lysine 109, tyrosine 132, and asparagine 187 each contribute to the substrate site. Lysine 249 is modified (N6-(pyridoxal phosphate)lysine). Positions 257 and 292 each coordinate pyridoxal 5'-phosphate. Asparagine 292 and arginine 388 together coordinate substrate.

It belongs to the class-I pyridoxal-phosphate-dependent aminotransferase family. LL-diaminopimelate aminotransferase subfamily. Homodimer. Pyridoxal 5'-phosphate serves as cofactor.

The enzyme catalyses (2S,6S)-2,6-diaminopimelate + 2-oxoglutarate = (S)-2,3,4,5-tetrahydrodipicolinate + L-glutamate + H2O + H(+). It participates in amino-acid biosynthesis; L-lysine biosynthesis via DAP pathway; LL-2,6-diaminopimelate from (S)-tetrahydrodipicolinate (aminotransferase route): step 1/1. In terms of biological role, involved in the synthesis of meso-diaminopimelate (m-DAP or DL-DAP), required for both lysine and peptidoglycan biosynthesis. Catalyzes the direct conversion of tetrahydrodipicolinate to LL-diaminopimelate. The protein is LL-diaminopimelate aminotransferase of Gloeothece citriformis (strain PCC 7424) (Cyanothece sp. (strain PCC 7424)).